A 315-amino-acid chain; its full sequence is Glycine--tRNA ligase alpha subunit (315 aa).

The protein belongs to the class-II aminoacyl-tRNA synthetase family. In terms of assembly, tetramer of two alpha and two beta subunits.

The protein localises to the cytoplasm. It catalyses the reaction tRNA(Gly) + glycine + ATP = glycyl-tRNA(Gly) + AMP + diphosphate. This Pseudomonas aeruginosa (strain LESB58) protein is Glycine--tRNA ligase alpha subunit.